The sequence spans 185 residues: ATP synthase subunit b 2 (185 aa).

Residues methionine 1–phenylalanine 25 are disordered. The chain crosses the membrane as a helical span at residues alanine 34 to leucine 56.

Belongs to the ATPase B chain family. F-type ATPases have 2 components, F(1) - the catalytic core - and F(0) - the membrane proton channel. F(1) has five subunits: alpha(3), beta(3), gamma(1), delta(1), epsilon(1). F(0) has three main subunits: a(1), b(2) and c(10-14). The alpha and beta chains form an alternating ring which encloses part of the gamma chain. F(1) is attached to F(0) by a central stalk formed by the gamma and epsilon chains, while a peripheral stalk is formed by the delta and b chains.

It is found in the cell inner membrane. Functionally, f(1)F(0) ATP synthase produces ATP from ADP in the presence of a proton or sodium gradient. F-type ATPases consist of two structural domains, F(1) containing the extramembraneous catalytic core and F(0) containing the membrane proton channel, linked together by a central stalk and a peripheral stalk. During catalysis, ATP synthesis in the catalytic domain of F(1) is coupled via a rotary mechanism of the central stalk subunits to proton translocation. Its function is as follows. Component of the F(0) channel, it forms part of the peripheral stalk, linking F(1) to F(0). The b'-subunit is a diverged and duplicated form of b found in plants and photosynthetic bacteria. In Nitrobacter winogradskyi (strain ATCC 25391 / DSM 10237 / CIP 104748 / NCIMB 11846 / Nb-255), this protein is ATP synthase subunit b 2 (atpF2).